The chain runs to 539 residues: Capsid protein VP1 (539 aa).

Positions 1 to 221 (MKMASNDANP…FIFLVPPTVE (221 aa)) are shell domain. The P1 sub-domain 1 stretch occupies residues 222–274 (SRTKPFTVPVLTVEEMSNSRFPIPLEKLYTGPSSAFVVQPQNGRCTTDGVLLG). Residues 222 to 539 (SRTKPFTVPV…GNGTGRRRAL (318 aa)) form a protruding domain region. Residues 275–417 (TTQLSAVNIC…SGRTGHNVHL (143 aa)) are P2 sub-domain. The segment at 418-539 (APAVAPTFPG…GNGTGRRRAL (122 aa)) is P1 sub-domain 2.

It belongs to the caliciviridae capsid protein family. As to quaternary structure, homodimer. Homomultimer. Interacts with the minor capsid protein VP2. Interacts (via C-terminus) with host type I histo-blood group structures antigens at the surface of target cells. May be cleaved by host protease to generate soluble capsid protein. Assembled capsid cannot be cleaved.

The protein localises to the virion. It localises to the host cytoplasm. In terms of biological role, capsid protein self assembles to form an icosahedral capsid with a T=3 symmetry, about 38 nm in diameter, and consisting of 180 capsid proteins. A smaller form of capsid with a diameter of 23 nm might be capsid proteins assembled as icosahedron with T=1 symmetry. The capsid encapsulates the genomic RNA and is decorated with VP2 proteins. Attaches virion to target cells by binding histo-blood group antigens (HBGAs) present on gastroduodenal epithelial cells. Functionally, the soluble capsid protein may play a role in viral immunoevasion. This chain is Capsid protein VP1, found in Homo sapiens (Human).